The primary structure comprises 513 residues: GMP synthase [glutamine-hydrolyzing] (513 aa).

A Glutamine amidotransferase type-1 domain is found at 9–198 (LILVLDFGSQ…VRRVCDCRGQ (190 aa)). The active-site Nucleophile is the cysteine 86. Residues histidine 172 and glutamate 174 contribute to the active site. The region spanning 199–388 (WTMENFIEIE…LGIPEHLVWR (190 aa)) is the GMPS ATP-PPase domain. Position 226-232 (226-232 (SGGVDSS)) interacts with ATP.

Homodimer.

The catalysed reaction is XMP + L-glutamine + ATP + H2O = GMP + L-glutamate + AMP + diphosphate + 2 H(+). Its pathway is purine metabolism; GMP biosynthesis; GMP from XMP (L-Gln route): step 1/1. Functionally, catalyzes the synthesis of GMP from XMP. This is GMP synthase [glutamine-hydrolyzing] from Staphylococcus aureus (strain USA300).